The primary structure comprises 452 residues: Bifunctional protein GlmU (452 aa).

A pyrophosphorylase region spans residues 1–224 (MNIVILAAGM…VWETHGVNSK (224 aa)). UDP-N-acetyl-alpha-D-glucosamine-binding positions include 6–9 (LAAG), K20, Q71, 76–77 (GT), 98–100 (YGD), G135, E149, N164, and N222. Residue D100 coordinates Mg(2+). Residue N222 coordinates Mg(2+). The segment at 225–245 (VQLAELERVHQNNIARALLEH) is linker. An N-acetyltransferase region spans residues 246–452 (GVTLADPARI…GWQRPVKIKK (207 aa)). 2 residues coordinate UDP-N-acetyl-alpha-D-glucosamine: R328 and K346. Residue H358 is the Proton acceptor of the active site. UDP-N-acetyl-alpha-D-glucosamine is bound by residues Y361 and N372. Acetyl-CoA is bound by residues A375, 381 to 382 (NY), S400, A418, and R435.

The protein in the N-terminal section; belongs to the N-acetylglucosamine-1-phosphate uridyltransferase family. This sequence in the C-terminal section; belongs to the transferase hexapeptide repeat family. As to quaternary structure, homotrimer. Mg(2+) serves as cofactor.

It is found in the cytoplasm. It carries out the reaction alpha-D-glucosamine 1-phosphate + acetyl-CoA = N-acetyl-alpha-D-glucosamine 1-phosphate + CoA + H(+). It catalyses the reaction N-acetyl-alpha-D-glucosamine 1-phosphate + UTP + H(+) = UDP-N-acetyl-alpha-D-glucosamine + diphosphate. Its pathway is nucleotide-sugar biosynthesis; UDP-N-acetyl-alpha-D-glucosamine biosynthesis; N-acetyl-alpha-D-glucosamine 1-phosphate from alpha-D-glucosamine 6-phosphate (route II): step 2/2. It participates in nucleotide-sugar biosynthesis; UDP-N-acetyl-alpha-D-glucosamine biosynthesis; UDP-N-acetyl-alpha-D-glucosamine from N-acetyl-alpha-D-glucosamine 1-phosphate: step 1/1. The protein operates within bacterial outer membrane biogenesis; LPS lipid A biosynthesis. Its function is as follows. Catalyzes the last two sequential reactions in the de novo biosynthetic pathway for UDP-N-acetylglucosamine (UDP-GlcNAc). The C-terminal domain catalyzes the transfer of acetyl group from acetyl coenzyme A to glucosamine-1-phosphate (GlcN-1-P) to produce N-acetylglucosamine-1-phosphate (GlcNAc-1-P), which is converted into UDP-GlcNAc by the transfer of uridine 5-monophosphate (from uridine 5-triphosphate), a reaction catalyzed by the N-terminal domain. The polypeptide is Bifunctional protein GlmU (Herminiimonas arsenicoxydans).